A 190-amino-acid polypeptide reads, in one-letter code: Elongation factor P-like protein (190 aa).

It belongs to the elongation factor P family.

In Klebsiella pneumoniae (strain 342), this protein is Elongation factor P-like protein.